Here is a 350-residue protein sequence, read N- to C-terminus: GTPase Obg (350 aa).

Residues 1-158 (MFIDSVKITL…RLVRLELKLI (158 aa)) form the Obg domain. The region spanning 159–339 (ADVGLVGFPN…LKFMLLEEIK (181 aa)) is the OBG-type G domain. GTP-binding positions include 165–172 (GFPNVGKS), 190–194 (FTTLT), 212–215 (DIPG), 280–283 (SKSD), and 320–322 (SSL). Positions 172 and 192 each coordinate Mg(2+).

Belongs to the TRAFAC class OBG-HflX-like GTPase superfamily. OBG GTPase family. Monomer. Mg(2+) serves as cofactor.

The protein localises to the cytoplasm. Its function is as follows. An essential GTPase which binds GTP, GDP and possibly (p)ppGpp with moderate affinity, with high nucleotide exchange rates and a fairly low GTP hydrolysis rate. Plays a role in control of the cell cycle, stress response, ribosome biogenesis and in those bacteria that undergo differentiation, in morphogenesis control. This Campylobacter jejuni (strain RM1221) protein is GTPase Obg.